A 196-amino-acid polypeptide reads, in one-letter code: MIGYLRGKIIEVMNDSALIDVSGVGYEIHASSNTLGDLQALLGNDIIVWIHTHVREDALQLFGFHDKEEKNLFLSLLKVNGVGPKMALSILSGGRPAQIHEMIEAGNAKALSGLPKVGKKTAEQIILTLKGKLVSIEEGGVVAKAKSVAHTQITSALLNLGYKSQLVDQFVSSLPADIAVEDGIRKGFQTLSGGLS.

A domain I region spans residues 1-65 (MIGYLRGKII…EDALQLFGFH (65 aa)). A domain II region spans residues 66–140 (DKEEKNLFLS…GKLVSIEEGG (75 aa)). A flexible linker region spans residues 140–144 (GVVAK). The tract at residues 145–196 (AKSVAHTQITSALLNLGYKSQLVDQFVSSLPADIAVEDGIRKGFQTLSGGLS) is domain III.

Belongs to the RuvA family. In terms of assembly, homotetramer. Forms an RuvA(8)-RuvB(12)-Holliday junction (HJ) complex. HJ DNA is sandwiched between 2 RuvA tetramers; dsDNA enters through RuvA and exits via RuvB. An RuvB hexamer assembles on each DNA strand where it exits the tetramer. Each RuvB hexamer is contacted by two RuvA subunits (via domain III) on 2 adjacent RuvB subunits; this complex drives branch migration. In the full resolvosome a probable DNA-RuvA(4)-RuvB(12)-RuvC(2) complex forms which resolves the HJ.

The protein localises to the cytoplasm. Functionally, the RuvA-RuvB-RuvC complex processes Holliday junction (HJ) DNA during genetic recombination and DNA repair, while the RuvA-RuvB complex plays an important role in the rescue of blocked DNA replication forks via replication fork reversal (RFR). RuvA specifically binds to HJ cruciform DNA, conferring on it an open structure. The RuvB hexamer acts as an ATP-dependent pump, pulling dsDNA into and through the RuvAB complex. HJ branch migration allows RuvC to scan DNA until it finds its consensus sequence, where it cleaves and resolves the cruciform DNA. The polypeptide is Holliday junction branch migration complex subunit RuvA (Bdellovibrio bacteriovorus (strain ATCC 15356 / DSM 50701 / NCIMB 9529 / HD100)).